The primary structure comprises 330 residues: Putative glycosyltransferase ORF330 (330 aa).

The protein belongs to the glycosyltransferase group 1 family. Glycosyltransferase 4 subfamily.

This Acidianus filamentous virus 2 (isolate Italy/Pozzuoli) (AFV-2) protein is Putative glycosyltransferase ORF330.